A 592-amino-acid chain; its full sequence is Glutamine--fructose-6-phosphate aminotransferase [isomerizing] (592 aa).

C2 (nucleophile; for GATase activity) is an active-site residue. Residues 2–217 (CGIVGYVGRD…DGEIADLTPD (216 aa)) enclose the Glutamine amidotransferase type-2 domain. 2 consecutive SIS domains span residues 277 to 416 (IPFK…EREN) and 441 to 582 (VAEK…VDQP). The active-site For Fru-6P isomerization activity is K587.

Homodimer.

It is found in the cytoplasm. The enzyme catalyses D-fructose 6-phosphate + L-glutamine = D-glucosamine 6-phosphate + L-glutamate. Functionally, catalyzes the first step in hexosamine metabolism, converting fructose-6P into glucosamine-6P using glutamine as a nitrogen source. This Aquifex aeolicus (strain VF5) protein is Glutamine--fructose-6-phosphate aminotransferase [isomerizing].